The primary structure comprises 217 residues: Membrane-associated progesterone receptor component 2 (217 aa).

The O-linked (Xyl...) (chondroitin sulfate) serine glycan is linked to serine 15. Residues 40 to 62 (ALLATGGEMLLNVALVALVLLGA) form a helical membrane-spanning segment. Serine 84, serine 98, and serine 202 each carry phosphoserine. One can recognise a Cytochrome b5 heme-binding domain in the interval 96–195 (DFSLEQLRQY…EKYDYVGRLL (100 aa)). The disordered stretch occupies residues 196–217 (KPGEEPSEYTDEEDTKDHSKQD). Residues 200–209 (EPSEYTDEED) show a composition bias toward acidic residues. Phosphotyrosine is present on tyrosine 204. Phosphothreonine is present on threonine 205.

The protein belongs to the cytochrome b5 family. MAPR subfamily. As to quaternary structure, interacts with PGRMC1. Interacts with AAAS. As to expression, expressed in brown adipose tissue, white adipose tissue, liver, heart, skeletal muscle, brain and adrenal gland.

Its subcellular location is the membrane. The protein resides in the nucleus envelope. The protein localises to the endoplasmic reticulum. It is found in the secreted. In terms of biological role, required for the maintenance of uterine histoarchitecture and normal female reproductive lifespan. May serve as a universal non-classical progesterone receptor in the uterus. Intracellular heme chaperone required for delivery of labile, or signaling heme, to the nucleus. Plays a role in adipocyte function and systemic glucose homeostasis. In brown fat, which has a high demand for heme, delivery of labile heme in the nucleus regulates the activity of heme-responsive transcriptional repressors such as NR1D1 and BACH1. This is Membrane-associated progesterone receptor component 2 from Mus musculus (Mouse).